The following is a 341-amino-acid chain: Dihydroorotate dehydrogenase (quinone) (341 aa).

FMN is bound by residues 61–65 and Thr-85; that span reads AGLDK. Lys-65 is a substrate binding site. 110 to 114 is a binding site for substrate; that stretch reads NRMGF. 2 residues coordinate FMN: Asn-138 and Asn-171. Asn-171 lines the substrate pocket. The active-site Nucleophile is the Ser-174. Asn-176 serves as a coordination point for substrate. Positions 216 and 244 each coordinate FMN. 245-246 provides a ligand contact to substrate; that stretch reads NT. FMN is bound by residues Gly-267, Gly-296, and 317–318; that span reads YS.

This sequence belongs to the dihydroorotate dehydrogenase family. Type 2 subfamily. Monomer. It depends on FMN as a cofactor.

The protein resides in the cell membrane. The enzyme catalyses (S)-dihydroorotate + a quinone = orotate + a quinol. It functions in the pathway pyrimidine metabolism; UMP biosynthesis via de novo pathway; orotate from (S)-dihydroorotate (quinone route): step 1/1. In terms of biological role, catalyzes the conversion of dihydroorotate to orotate with quinone as electron acceptor. The protein is Dihydroorotate dehydrogenase (quinone) of Pseudomonas putida (strain GB-1).